Here is an 82-residue protein sequence, read N- to C-terminus: Putative membrane protein insertion efficiency factor (82 aa).

The protein belongs to the UPF0161 family.

Its subcellular location is the cell inner membrane. Functionally, could be involved in insertion of integral membrane proteins into the membrane. In Rickettsia peacockii (strain Rustic), this protein is Putative membrane protein insertion efficiency factor.